The sequence spans 101 residues: Small ribosomal subunit protein uS14 (101 aa).

It belongs to the universal ribosomal protein uS14 family. Part of the 30S ribosomal subunit. Contacts proteins S3 and S10.

Binds 16S rRNA, required for the assembly of 30S particles and may also be responsible for determining the conformation of the 16S rRNA at the A site. The polypeptide is Small ribosomal subunit protein uS14 (Paraburkholderia phymatum (strain DSM 17167 / CIP 108236 / LMG 21445 / STM815) (Burkholderia phymatum)).